The following is a 76-amino-acid chain: Conotoxin Im6.9 (76 aa).

The signal sequence occupies residues 1–19 (MEKLTILLLVTAVLMSTQA). Positions 20-45 (LMQSGIEKRQRAKIKFFSKRKTTAER) are excised as a propeptide. Intrachain disulfides connect cysteine 51-cysteine 65, cysteine 58-cysteine 69, and cysteine 64-cysteine 73.

Belongs to the conotoxin O2 superfamily. Expressed by the venom duct.

Its subcellular location is the secreted. In terms of biological role, probable neurotoxin. This is Conotoxin Im6.9 from Conus imperialis (Imperial cone).